Here is a 676-residue protein sequence, read N- to C-terminus: UvrABC system protein B (676 aa).

In terms of domain architecture, Helicase ATP-binding spans 35–192; sequence QGVADGLMYQ…ARLVAMQYTR (158 aa). ATP is bound at residue 48-55; that stretch reads GVTGSGKT. A Beta-hairpin motif is present at residues 101-124; it reads YYDYYQPEAYVPTRDLFIEKDSSV. The 167-residue stretch at 439-605 folds into the Helicase C-terminal domain; sequence QVDDLLGEIR…GVNKAVRELI (167 aa). The UVR domain maps to 634 to 669; that stretch reads AREIKRLEKLMMDHARNLEFEQAAAARDALTALKNR.

The protein belongs to the UvrB family. Forms a heterotetramer with UvrA during the search for lesions. Interacts with UvrC in an incision complex.

It is found in the cytoplasm. In terms of biological role, the UvrABC repair system catalyzes the recognition and processing of DNA lesions. A damage recognition complex composed of 2 UvrA and 2 UvrB subunits scans DNA for abnormalities. Upon binding of the UvrA(2)B(2) complex to a putative damaged site, the DNA wraps around one UvrB monomer. DNA wrap is dependent on ATP binding by UvrB and probably causes local melting of the DNA helix, facilitating insertion of UvrB beta-hairpin between the DNA strands. Then UvrB probes one DNA strand for the presence of a lesion. If a lesion is found the UvrA subunits dissociate and the UvrB-DNA preincision complex is formed. This complex is subsequently bound by UvrC and the second UvrB is released. If no lesion is found, the DNA wraps around the other UvrB subunit that will check the other stand for damage. The protein is UvrABC system protein B of Bordetella avium (strain 197N).